Consider the following 336-residue polypeptide: Atypical chemokine receptor 1 (336 aa).

Residues 1–63 are Extracellular-facing; the sequence is MGNCLHQAEL…CNLLDDSSLP (63 aa). N-linked (GlcNAc...) asparagine glycans are attached at residues Asn16 and Asn33. Intrachain disulfides connect Cys51–Cys276 and Cys129–Cys195. The chain crosses the membrane as a helical span at residues 64-84; that stretch reads FFILASVLGILASSTVLFMLF. At 85-95 the chain is on the cytoplasmic side; sequence RPLFRWQLCPG. Residues 96 to 116 traverse the membrane as a helical segment; the sequence is WPVLAQLAVGSALFSIVVPIL. Residues 117–129 are Extracellular-facing; it reads APGLGNTRSSALC. Residues 130-153 traverse the membrane as a helical segment; the sequence is SLGYCVWYGSAFAQALLLGCHASL. Topologically, residues 154–166 are cytoplasmic; the sequence is GPKLGAGQVPGLT. The helical transmembrane segment at 167–187 threads the bilayer; that stretch reads LGLTVGLWGAAALLTVPITLA. The Extracellular segment spans residues 188-207; the sequence is SGASDGLCTPIYSTELKALQ. Residues 208 to 228 traverse the membrane as a helical segment; it reads ATHTVACFAIFVLLPLGLFGA. The Cytoplasmic portion of the chain corresponds to 229–244; the sequence is KGVKKALGMGPGPWMT. The helical transmembrane segment at 245–265 threads the bilayer; that stretch reads ILWIWFIFWWPHGVVLGLDFL. Residues 266 to 287 lie on the Extracellular side of the membrane; it reads VRSKLLLLPTCLAQQVLDLLLN. The helical transmembrane segment at 288 to 308 threads the bilayer; that stretch reads LAEALTIVHCVATPLLLALFC. Residues 309 to 336 are Cytoplasmic-facing; the sequence is HQATRTLLPSLPLPERWSSPVDTLGSKS.

Belongs to the G-protein coupled receptor 1 family. Atypical chemokine receptor subfamily.

It is found in the early endosome. The protein localises to the recycling endosome. It localises to the membrane. Atypical chemokine receptor that controls chemokine levels and localization via high-affinity chemokine binding that is uncoupled from classic ligand-driven signal transduction cascades, resulting instead in chemokine sequestration, degradation, or transcytosis. Also known as interceptor (internalizing receptor) or chemokine-scavenging receptor or chemokine decoy receptor. Has a promiscuous chemokine-binding profile, interacting with inflammatory chemokines of both the CXC and the CC subfamilies but not with homeostatic chemokines. Acts as a receptor for chemokines including CCL2, CCL5, CCL7, CCL11, CCL13, CCL14, CCL17, CXCL5, CXCL6, IL8/CXCL8, CXCL11, GRO, RANTES, MCP-1 and TARC. May regulate chemokine bioavailability and, consequently, leukocyte recruitment through two distinct mechanisms: when expressed in endothelial cells, it sustains the abluminal to luminal transcytosis of tissue-derived chemokines and their subsequent presentation to circulating leukocytes; when expressed in erythrocytes, serves as blood reservoir of cognate chemokines but also as a chemokine sink, buffering potential surges in plasma chemokine levels. In Sapajus apella (Brown-capped capuchin), this protein is Atypical chemokine receptor 1 (ACKR1).